Here is a 44-residue protein sequence, read N- to C-terminus: Cytochrome b559 subunit beta (44 aa).

The helical transmembrane segment at 19 to 35 (WIAVHTLAVPSVFFLGA) threads the bilayer. Heme is bound at residue His23.

This sequence belongs to the PsbE/PsbF family. In terms of assembly, heterodimer of an alpha subunit and a beta subunit. PSII is composed of 1 copy each of membrane proteins PsbA, PsbB, PsbC, PsbD, PsbE, PsbF, PsbH, PsbI, PsbJ, PsbK, PsbL, PsbM, PsbT, PsbX, PsbY, PsbZ, Psb30/Ycf12, peripheral proteins PsbO, CyanoQ (PsbQ), PsbU, PsbV and a large number of cofactors. It forms dimeric complexes. It depends on heme b as a cofactor.

It localises to the cellular thylakoid membrane. Its function is as follows. This b-type cytochrome is tightly associated with the reaction center of photosystem II (PSII). PSII is a light-driven water:plastoquinone oxidoreductase that uses light energy to abstract electrons from H(2)O, generating O(2) and a proton gradient subsequently used for ATP formation. It consists of a core antenna complex that captures photons, and an electron transfer chain that converts photonic excitation into a charge separation. This is Cytochrome b559 subunit beta from Cyanothece sp. (strain PCC 7425 / ATCC 29141).